The sequence spans 649 residues: tRNA-guanine(15) transglycosylase (649 aa).

D88 functions as the Nucleophile in the catalytic mechanism. Substrate-binding residues include D123 and A194. C280, C282, and C285 together coordinate Zn(2+). Residues 573–648 form the PUA domain; that stretch reads KYRIVIDSSV…VAVTLRGGLK (76 aa).

It belongs to the archaeosine tRNA-ribosyltransferase family. Requires Zn(2+) as cofactor.

The catalysed reaction is guanosine(15) in tRNA + 7-cyano-7-deazaguanine = 7-cyano-7-carbaguanosine(15) in tRNA + guanine. It participates in tRNA modification; archaeosine-tRNA biosynthesis. In terms of biological role, exchanges the guanine residue with 7-cyano-7-deazaguanine (preQ0) at position 15 in the dihydrouridine loop (D-loop) of archaeal tRNAs. This is tRNA-guanine(15) transglycosylase from Methanococcus maripaludis (strain C7 / ATCC BAA-1331).